Reading from the N-terminus, the 68-residue chain is Small cysteine-rich protein 2 (68 aa).

The signal sequence occupies residues 1–24 (MAVKFHLCLLLIILVGMGAHVAFA).

This sequence belongs to the Cnidaria small cysteine-rich protein (SCRiP) family. gamma subfamily. Post-translationally, contains 4 disulfide bonds.

It localises to the secreted. The protein localises to the nematocyst. Functionally, induces neurotoxic symptoms on zebrafish. Has also been claimed to be implied in calcification, but tests on homolog proteins suggest that proteins of this family have a neurotoxic function and not a calcification function. This is Small cysteine-rich protein 2 from Orbicella faveolata (Mountainous star coral).